The following is a 61-amino-acid chain: Metallothionein-2B (61 aa).

An N-acetylmethionine modification is found at methionine 1. The segment at methionine 1 to cysteine 29 is beta. A divalent metal cation-binding residues include cysteine 5, cysteine 7, cysteine 13, cysteine 15, cysteine 19, cysteine 21, cysteine 24, cysteine 26, cysteine 29, cysteine 33, cysteine 34, cysteine 36, cysteine 37, cysteine 41, cysteine 44, cysteine 48, cysteine 50, cysteine 57, cysteine 59, and cysteine 60. Residues lysine 30–alanine 61 form an alpha region.

It belongs to the metallothionein superfamily. Type 1 family. Monomer.

Functionally, metallothioneins have a high content of cysteine residues that bind various heavy metals; these proteins are transcriptionally regulated by both heavy metals and glucocorticoids. This is Metallothionein-2B from Oryctolagus cuniculus (Rabbit).